The primary structure comprises 427 residues: Tol-Pal system protein TolB (427 aa).

The N-terminal stretch at 1 to 23 is a signal peptide; the sequence is MKLLKRLVSVFAIVLAVGSNAFA.

Belongs to the TolB family. In terms of assembly, the Tol-Pal system is composed of five core proteins: the inner membrane proteins TolA, TolQ and TolR, the periplasmic protein TolB and the outer membrane protein Pal. They form a network linking the inner and outer membranes and the peptidoglycan layer.

It is found in the periplasm. Its function is as follows. Part of the Tol-Pal system, which plays a role in outer membrane invagination during cell division and is important for maintaining outer membrane integrity. This is Tol-Pal system protein TolB from Haemophilus influenzae (strain 86-028NP).